Here is a 473-residue protein sequence, read N- to C-terminus: Glutamate--tRNA ligase 1 (473 aa).

The 'HIGH' region signature appears at 11–21 (PSPTGYLHIGG). Residues 113 to 133 (KARAEGRPPRYDGRWRDRDPS) show a composition bias toward basic and acidic residues. Residues 113–136 (KARAEGRPPRYDGRWRDRDPSEAP) are disordered. A 'KMSKS' region motif is present at residues 240-244 (KLSKR). Lysine 243 serves as a coordination point for ATP.

Belongs to the class-I aminoacyl-tRNA synthetase family. Glutamate--tRNA ligase type 1 subfamily. As to quaternary structure, monomer.

The protein localises to the cytoplasm. It catalyses the reaction tRNA(Glu) + L-glutamate + ATP = L-glutamyl-tRNA(Glu) + AMP + diphosphate. Functionally, catalyzes the attachment of glutamate to tRNA(Glu) in a two-step reaction: glutamate is first activated by ATP to form Glu-AMP and then transferred to the acceptor end of tRNA(Glu). This Brucella melitensis biotype 1 (strain ATCC 23456 / CCUG 17765 / NCTC 10094 / 16M) protein is Glutamate--tRNA ligase 1.